A 301-amino-acid chain; its full sequence is tRNA dimethylallyltransferase 2 (301 aa).

11–18 is an ATP binding site; sequence GATASGKT. 13–18 provides a ligand contact to substrate; sequence TASGKT. The interaction with substrate tRNA stretch occupies residues 36-39; the sequence is DSRQ.

This sequence belongs to the IPP transferase family. In terms of assembly, monomer. Requires Mg(2+) as cofactor.

It carries out the reaction adenosine(37) in tRNA + dimethylallyl diphosphate = N(6)-dimethylallyladenosine(37) in tRNA + diphosphate. In terms of biological role, catalyzes the transfer of a dimethylallyl group onto the adenine at position 37 in tRNAs that read codons beginning with uridine, leading to the formation of N6-(dimethylallyl)adenosine (i(6)A). The protein is tRNA dimethylallyltransferase 2 of Shewanella sediminis (strain HAW-EB3).